The sequence spans 286 residues: MAQEKMELDLELPAGTGASPAEGGGPGSGGLRRSNSAPLIHGLSDSSPVFQAEAPSARRNSTTFPSRHGLLLPASPVRMHSSRLHQIKQEEGMDLINRETVHEREVQTAMQISHSWEESFSLSDNDVEKSASPKRIDFIPVSPAPSPTRGIGKQCFSPSLQSFVSSNGLPPSPIPSPTTRFTTRRSQSPINCIRPSVLGPLKRKCEMETDYQPKRFFQGITNMLSSDVAQLSEPGVCVSSDTLDGNSSSAGSSCNSPAKVSTTTDSPVSPAQAASPFIPVDELSSK.

The segment at 1–46 (MAQEKMELDLELPAGTGASPAEGGGPGSGGLRRSNSAPLIHGLSDS) is disordered. Position 34 is a phosphoserine (Ser-34). Position 36 is a phosphoserine; by CHEK1 (Ser-36). Phosphoserine occurs at positions 44, 47, 61, and 75. Lys-88 participates in a covalent cross-link: Glycyl lysine isopeptide (Lys-Gly) (interchain with G-Cter in SUMO1). Phosphoserine is present on residues Ser-142 and Ser-146. Position 148 is a phosphothreonine (Thr-148). The tract at residues 166-187 (SNGLPPSPIPSPTTRFTTRRSQ) is disordered. The segment covering 177–187 (PTTRFTTRRSQ) has biased composition (low complexity). A phosphoserine mark is found at Ser-186 and Ser-188. The tract at residues 238–286 (VSSDTLDGNSSSAGSSCNSPAKVSTTTDSPVSPAQAASPFIPVDELSSK) is disordered. The segment covering 245 to 256 (GNSSSAGSSCNS) has biased composition (low complexity). The segment covering 258–269 (AKVSTTTDSPVS) has biased composition (polar residues). Phosphoserine occurs at positions 266, 269, and 275.

Belongs to the FAM122 family. In terms of assembly, interacts with PPP2CA and PPP2R1A. Interacts (via its N-terminus) with PPP2R2A; the interaction is direct and this interaction inhibits PP2A activity. The CHEK1-mediated Ser-36 phosphorylated form interacts with 14-3-3 proteins. CHEK1-mediated phosphorylation at Ser-36 negatively regulates its ability to inhibit serine/threonine-protein phosphatase 2A (PP2A) activity. Phosphorylation leads to its release from the PP2A complex and its sequestration by 14-3-3 proteins in the cytoplasm resulting in its inability to translocate to the nucleus, where it otherwise inhibits PP2A.

It is found in the nucleus. The protein localises to the cytoplasm. Functionally, acts as an inhibitor of serine/threonine-protein phosphatase 2A (PP2A) activity. Inhibits PP2A activity by blocking the substrate binding site on PPP2R2A and the active site of PPP2CA. Potentiates ubiquitin-mediated proteasomal degradation of serine/threonine-protein phosphatase 2A catalytic subunit alpha (PPP2CA). Inhibits PP2A-mediated dephosphorylation of WEE1, promoting ubiquitin-mediated proteolysis of WEE1, thereby releasing G2/M checkpoint. The chain is P2R1A-PPP2R2A-interacting phosphatase regulator 1 from Rattus norvegicus (Rat).